The primary structure comprises 492 residues: Putative protein disulfide-isomerase C1F5.02 (492 aa).

The first 22 residues, 1–22, serve as a signal peptide directing secretion; the sequence is MKISNLLAAFLAFSGGFFCASA. Residues 23–128 form the Thioredoxin 1 domain; it reads EVPKVNKEGL…LVKYMRKQLL (106 aa). Catalysis depends on nucleophile residues C51 and C54. A disulfide bridge connects residues C51 and C54. 2 N-linked (GlcNAc...) asparagine glycosylation sites follow: N161 and N257. The 140-residue stretch at 323-462 folds into the Thioredoxin 2 domain; that stretch reads ELTAKAMTKF…LSAFIDKHAS (140 aa). Active-site nucleophile residues include C385 and C388. C385 and C388 are joined by a disulfide. Positions 468–492 are disordered; that stretch reads KEKESVPAPDLEDQVAVEDEMADEL. Acidic residues predominate over residues 477 to 492; it reads DLEDQVAVEDEMADEL. Residues 489-492 carry the Prevents secretion from ER motif; that stretch reads ADEL.

Belongs to the protein disulfide isomerase family.

It is found in the endoplasmic reticulum lumen. The catalysed reaction is Catalyzes the rearrangement of -S-S- bonds in proteins.. Its function is as follows. Participates in the folding of proteins containing disulfide bonds, may be involved in glycosylation, prolyl hydroxylation and triglyceride transfer. The sequence is that of Putative protein disulfide-isomerase C1F5.02 from Schizosaccharomyces pombe (strain 972 / ATCC 24843) (Fission yeast).